A 73-amino-acid polypeptide reads, in one-letter code: Homeodomain-only protein (73 aa).

The homeobox; degenerate DNA-binding region spans 3-62 (AETASGPTEDQVEILEYNFNKVDKHPDSTTLCLIAAEAGLSEEETQKWFKQRLAKWRRSE).

As to quaternary structure, interacts with serum response factor (SRF). Component of a large complex containing histone deacetylases such as HDAC2. Interacts with the acetylated forms of HSPA1A and HSPA1B. Interacts with HSPA8. As to expression, widely expressed. Expressed in the heart, brain, placenta, lung, skeletal and smooth muscles, uterus, urinary bladder, kidney and spleen. Down-regulated in some types of cancer such as lung cancer, choriocarcinoma, head and neck squamous cell carcinoma and oral squamous cell carcinoma.

Its subcellular location is the nucleus. It localises to the cytoplasm. Atypical homeodomain protein which does not bind DNA and is required to modulate cardiac growth and development. Acts via its interaction with SRF, thereby modulating the expression of SRF-dependent cardiac-specific genes and cardiac development. Prevents SRF-dependent transcription either by inhibiting SRF binding to DNA or by recruiting histone deacetylase (HDAC) proteins that prevent transcription by SRF. Overexpression causes cardiac hypertrophy. May act as a tumor suppressor. Acts as a co-chaperone for HSPA1A and HSPA1B chaperone proteins and assists in chaperone-mediated protein refolding. This chain is Homeodomain-only protein (HOPX), found in Homo sapiens (Human).